A 451-amino-acid chain; its full sequence is Gamma-aminobutyric acid receptor subunit alpha-2 (451 aa).

The first 28 residues, 1–28 (MKTKLSTCNVWSLLLVLLVWDPVRLVLA), serve as a signal peptide directing secretion. Over 29–249 (NIQEDEAKNN…MTAHFHLKRK (221 aa)) the chain is Extracellular. A glycan (N-linked (GlcNAc...) asparagine) is linked at Asn38. Arg94 lines the 4-aminobutanoate pocket. N-linked (GlcNAc...) asparagine glycosylation occurs at Asn138. Thr157 lines the 4-aminobutanoate pocket. Residues Cys166 and Cys180 are joined by a disulfide bond. The helical transmembrane segment at 250 to 270 (IGYFVIQTYLPCIMTVILSQV) threads the bilayer. The Cytoplasmic portion of the chain corresponds to 271–280 (SFWLNRESVP). Residues 281 to 300 (ARTVFGVTTVLTMTTLSISA) traverse the membrane as a helical segment. The Extracellular segment spans residues 301 to 311 (RNSLPKVAYAT). Residues 312–332 (AMDWFIAVCYAFVFSALIEFA) traverse the membrane as a helical segment. The Cytoplasmic portion of the chain corresponds to 333-420 (TVNYFTKRGW…FNSVSKIDRM (88 aa)). The tract at residues 389-408 (KSATTPEPNKKPENKPAEAK) is disordered. The span at 396–408 (PNKKPENKPAEAK) shows a compositional bias: basic and acidic residues. A helical transmembrane segment spans residues 421 to 441 (SRIVFPVLFGTFNLVYWATYL). At 442–451 (NREPVLGVSP) the chain is on the extracellular side.

The protein belongs to the ligand-gated ion channel (TC 1.A.9) family. Gamma-aminobutyric acid receptor (TC 1.A.9.5) subfamily. GABRA2 sub-subfamily. As to quaternary structure, heteropentamer, formed by a combination of alpha (GABRA1-6), beta (GABRB1-3), gamma (GABRG1-3), delta (GABRD), epsilon (GABRE), rho (GABRR1-3), pi (GABRP) and theta (GABRQ) subunits, each subunit exhibiting distinct physiological and pharmacological properties. Interacts with UBQLN1. Interacts with KIF21B. Interacts with LHFPL4. Interacts with SHISA7; interaction leads to the regulation of GABA(A) receptor trafficking, channel deactivation kinetics and pharmacology. Glycosylated.

It is found in the postsynaptic cell membrane. The protein resides in the cell membrane. It localises to the cytoplasmic vesicle membrane. The protein localises to the cell projection. Its subcellular location is the dendrite. The catalysed reaction is chloride(in) = chloride(out). Activated by pentobarbital. Inhibited by the antagonist bicuculline. Functionally, alpha subunit of the heteropentameric ligand-gated chloride channel gated by gamma-aminobutyric acid (GABA), a major inhibitory neurotransmitter in the brain. GABA-gated chloride channels, also named GABA(A) receptors (GABAAR), consist of five subunits arranged around a central pore and contain GABA active binding site(s) located at the alpha and beta subunit interface(s). When activated by GABA, GABAARs selectively allow the flow of chloride anions across the cell membrane down their electrochemical gradient. Chloride influx into the postsynaptic neuron following GABAAR opening decreases the neuron ability to generate a new action potential, thereby reducing nerve transmission. The alpha-2 subunit exhibits synaptogenic activity together with beta-2 and very little to no activity together with beta-3, the gamma-2 subunit being necessary but not sufficient to induce rapid synaptic contacts formation. This is Gamma-aminobutyric acid receptor subunit alpha-2 from Mus musculus (Mouse).